The sequence spans 241 residues: Endo-chitosanase B (241 aa).

The N-terminal stretch at 1–17 is a signal peptide; sequence MRLSEILAVALVTGATA. Asparagine 86 is a glycosylation site (N-linked (GlcNAc...) asparagine).

Belongs to the glycosyl hydrolase 75 family.

It localises to the secreted. It catalyses the reaction Endohydrolysis of beta-(1-&gt;4)-linkages between D-glucosamine residues in a partly acetylated chitosan.. Its function is as follows. Chitosanase catalyzing the endo-type cleavage of chitosan, the deacylated form of chitin. Chitosanase may be crucial in the degradation of the deacetylated portion of chitin in the fungal cell wall. Chitoolisaccharides produced by the hydrolysis of partially N-acetylated chitosan are known to have many biological activities, including antibacterial activity, immune-enhancing effects, and elicitor activity. This Aspergillus oryzae (strain ATCC 42149 / RIB 40) (Yellow koji mold) protein is Endo-chitosanase B (csnB).